The primary structure comprises 493 residues: MERWRFSLMVFNNKLKHEYGIKKSLDSVSSIENTIENKDSNSKPNIKGRAQNIRSCGGRDNYSYNNIIYLFGVEYNRNLIPNDTFLFRDNKGDSFYISFNIENHIFEIDINFSCLSELEIERYFYSYHGFDYFNFNNGSAIEDYLYNHYMYDTPSNNHITSCIESYLQSQICVNPSIISDSSDSYIFGCFDKRRTHNESRRSGIRNRAQSSYLTIRESFNNLDSTKKYKHLWVQCENCYGLNYKKFLKSKINLCEQCGYHFKMSSSERIEVLVDPDTWYPMDEDMSSLDPIEFHSEEEPYKDRIYSYQKRTGLTEAVQTGLGQLNGIPIAIGVMDFQFMGGSMGSVVGEKITRLIEYATNKILPLIIVCASGGARMQEGSLSLMQMAKISSALFDYQSNKKLLYVSILTSPTTGGVTASFGMLGDIIIAEPNSYIAFAGKRVIEQTLHKIVPEGSQAAEYLFQKGLFDLIIPRNLLKSVLGELFKLHAFFPLN.

Positions 231 to 493 (LWVQCENCYG…FKLHAFFPLN (263 aa)) constitute a CoA carboxyltransferase N-terminal domain. Zn(2+) contacts are provided by Cys-235, Cys-238, Cys-254, and Cys-257. The segment at 235 to 257 (CENCYGLNYKKFLKSKINLCEQC) adopts a C4-type zinc-finger fold.

Belongs to the AccD/PCCB family. Acetyl-CoA carboxylase is a heterohexamer composed of biotin carboxyl carrier protein, biotin carboxylase and 2 subunits each of ACCase subunit alpha and ACCase plastid-coded subunit beta (accD). Zn(2+) is required as a cofactor.

It is found in the plastid stroma. It carries out the reaction N(6)-carboxybiotinyl-L-lysyl-[protein] + acetyl-CoA = N(6)-biotinyl-L-lysyl-[protein] + malonyl-CoA. It participates in lipid metabolism; malonyl-CoA biosynthesis; malonyl-CoA from acetyl-CoA: step 1/1. Component of the acetyl coenzyme A carboxylase (ACC) complex. Biotin carboxylase (BC) catalyzes the carboxylation of biotin on its carrier protein (BCCP) and then the CO(2) group is transferred by the transcarboxylase to acetyl-CoA to form malonyl-CoA. The chain is Acetyl-coenzyme A carboxylase carboxyl transferase subunit beta from Epifagus virginiana (Beechdrops).